The following is an 86-amino-acid chain: Translation initiation factor IF-1 3 (86 aa).

The region spanning 1-72 (MAKEELIEMQ…NKGRVTFRHI (72 aa)) is the S1-like domain.

It belongs to the IF-1 family. As to quaternary structure, component of the 30S ribosomal translation pre-initiation complex which assembles on the 30S ribosome in the order IF-2 and IF-3, IF-1 and N-formylmethionyl-tRNA(fMet); mRNA recruitment can occur at any time during PIC assembly.

Its subcellular location is the cytoplasm. Its function is as follows. One of the essential components for the initiation of protein synthesis. Stabilizes the binding of IF-2 and IF-3 on the 30S subunit to which N-formylmethionyl-tRNA(fMet) subsequently binds. Helps modulate mRNA selection, yielding the 30S pre-initiation complex (PIC). Upon addition of the 50S ribosomal subunit IF-1, IF-2 and IF-3 are released leaving the mature 70S translation initiation complex. This is Translation initiation factor IF-1 3 from Acidovorax sp. (strain JS42).